A 222-amino-acid polypeptide reads, in one-letter code: Chymotrypsin-1 (222 aa).

The region spanning 1–221 (IVGGKDAPVG…FVSWINANLK (221 aa)) is the Peptidase S1 domain. C26 and C42 form a disulfide bridge. Residues H41 and D87 each act as charge relay system in the active site. 2 cysteine pairs are disulfide-bonded: C151–C164 and C174–C198. The active-site Charge relay system is S178.

This sequence belongs to the peptidase S1 family.

The protein resides in the secreted. It localises to the extracellular space. The catalysed reaction is Preferential cleavage: Tyr-|-Xaa, Trp-|-Xaa, Phe-|-Xaa, Leu-|-Xaa.. The protein is Chymotrypsin-1 of Solenopsis invicta (Red imported fire ant).